A 202-amino-acid polypeptide reads, in one-letter code: Protein phosphatase inhibitor 2 family member C (202 aa).

2 disordered regions span residues 1 to 51 (MSAS…DESS) and 71 to 118 (PGTS…EQES). Positions 12–17 (KGILKN) are required for binding PPP1CC. Residues 19–35 (SSSGSSVATSGQQSGGT) are compositionally biased toward low complexity. The interval 43 to 55 (KSQKWDESSILAA) is required for binding PPP1CC. A compositionally biased stretch (polar residues) spans 71–80 (PGTSYMSVQD). The span at 84 to 112 (DSVRDVEGEDSVRGVEGKEATDASDHSCE) shows a compositional bias: basic and acidic residues. The segment at 144–147 (HYNE) is required for binding PPP1CC catalytic center, displacing metal ions and inhibition of PPP1CC catalytic activity. Positions 162 to 202 (LQSEDNENEETPQGTNEEKTAAEESEEAPLTGGLQTQSCDP) are disordered.

This sequence belongs to the protein phosphatase inhibitor 2 family. Detected in sperm (at protein level).

In terms of biological role, functions as a protein phosphatase inhibitor. It inhibits activity of the catalytic subunit of PP1 and weakly inhibits the activity of myosin-associated phosphates. The chain is Protein phosphatase inhibitor 2 family member C from Homo sapiens (Human).